The following is an 878-amino-acid chain: Alanine--tRNA ligase (878 aa).

His-567, His-571, Cys-669, and His-673 together coordinate Zn(2+).

The protein belongs to the class-II aminoacyl-tRNA synthetase family. Zn(2+) serves as cofactor.

The protein localises to the cytoplasm. The enzyme catalyses tRNA(Ala) + L-alanine + ATP = L-alanyl-tRNA(Ala) + AMP + diphosphate. In terms of biological role, catalyzes the attachment of alanine to tRNA(Ala) in a two-step reaction: alanine is first activated by ATP to form Ala-AMP and then transferred to the acceptor end of tRNA(Ala). Also edits incorrectly charged Ser-tRNA(Ala) and Gly-tRNA(Ala) via its editing domain. This Rickettsia conorii (strain ATCC VR-613 / Malish 7) protein is Alanine--tRNA ligase.